The chain runs to 334 residues: DNA-directed RNA polymerase subunit alpha (334 aa).

Positions 1-234 (MQRSLNEFLT…QQLAVFVDFD (234 aa)) are alpha N-terminal domain (alpha-NTD). The interval 248–334 (IDPILLRPVD…IRGDDRVLGG (87 aa)) is alpha C-terminal domain (alpha-CTD).

It belongs to the RNA polymerase alpha chain family. As to quaternary structure, homodimer. The RNAP catalytic core consists of 2 alpha, 1 beta, 1 beta' and 1 omega subunit. When a sigma factor is associated with the core the holoenzyme is formed, which can initiate transcription.

The catalysed reaction is RNA(n) + a ribonucleoside 5'-triphosphate = RNA(n+1) + diphosphate. In terms of biological role, DNA-dependent RNA polymerase catalyzes the transcription of DNA into RNA using the four ribonucleoside triphosphates as substrates. The chain is DNA-directed RNA polymerase subunit alpha from Hahella chejuensis (strain KCTC 2396).